Consider the following 528-residue polypeptide: Autophagy-related protein 22 (528 aa).

Over 1–98 the chain is Cytoplasmic; that stretch reads MSYGTINDMN…IFVDTSSFAL (98 aa). Residues 99-119 form a helical membrane-spanning segment; the sequence is YVFSLSVLFQTIIVISVSGIV. Residues 120 to 130 are Vacuolar-facing; sequence DLWGSVKFKGR. The chain crosses the membrane as a helical span at residues 131-151; sequence ILVWFGIVGALSTVAISKLND. Residues 152–153 lie on the Cytoplasmic side of the membrane; it reads TQ. The chain crosses the membrane as a helical span at residues 154–174; that stretch reads IYSLAGLYIVANGCFGVINVV. At 175 to 210 the chain is on the vacuolar side; the sequence is GNSLLPIFVKDSLKCQSQGAYEPDKVDSLTTVISGR. A helical transmembrane segment spans residues 211–231; that stretch reads GASLGYSSALIVQIVSMFLVA. The Cytoplasmic segment spans residues 232 to 241; it reads SKKGSKQDVQ. A helical membrane pass occupies residues 242-262; sequence VAVLFVGIWWFVWQLPMIWLI. The Vacuolar portion of the chain corresponds to 263–318; sequence DDVTIPIRADDSTLASARSPYPGEQDALGQLNWKNYLSYGWVSLFESFKHARLLKD. Residue Ser-278 is modified to Phosphoserine. Residues 319-339 form a helical membrane-spanning segment; the sequence is VMIFLIAWFIISDSITTINST. Residues 340–352 lie on the Cytoplasmic side of the membrane; the sequence is AVLFSKAELHMST. The helical transmembrane segment at 353 to 373 threads the bilayer; that stretch reads LNLIMISVLTVVNAMLGAFMI. Residues 374-388 lie on the Vacuolar side of the membrane; that stretch reads PQFLATKFRWTSSQT. The chain crosses the membrane as a helical span at residues 389–409; sequence LMYIIIWASFIPFYGILGFFF. The Cytoplasmic portion of the chain corresponds to 410 to 417; it reads NAFGLKHK. The helical transmembrane segment at 418-438 threads the bilayer; sequence FEMFLLAIWYGLSLGGLSAVS. Topologically, residues 439-485 are vacuolar; sequence RSVFSLIVPPGKESTFFSMFSITDKGSSILGPFLVGLLTDKTHNIRY. Residues 486–506 traverse the membrane as a helical segment; the sequence is SFYFFFLLLMLSLPVLNCLDV. The Cytoplasmic segment spans residues 507–528; it reads KRGRREAEELSQVLPESERRLD.

It belongs to the ATG22 family.

The protein resides in the vacuole membrane. Its function is as follows. Vacuolar effluxer which mediate the efflux of amino acids resulting from autophagic degradation. The release of autophagic amino acids allows the maintenance of protein synthesis and viability during nitrogen starvation. The sequence is that of Autophagy-related protein 22 (ATG22) from Saccharomyces cerevisiae (strain YJM789) (Baker's yeast).